Consider the following 221-residue polypeptide: GTP-binding nuclear protein Ran2 (221 aa).

A Small GTPase Ran-type domain is found at 10 to 174; it reads DYPSFKLVIV…LYLARKLAGD (165 aa). 21-28 serves as a coordination point for GTP; the sequence is DGGTGKTT. The segment at 40-48 is switch-I; the sequence is KKYEPTIGV. Residues G71, 125–128, and 153–155 contribute to the GTP site; these read NKVD and SAK. Residues 71-87 form a switch-II region; it reads GQEKFGGLRDGYYIHGQ.

This sequence belongs to the small GTPase superfamily. Ran family. Found in a nuclear export complex with RanGTP, exportin and pre-miRNA.

It is found in the nucleus. Its function is as follows. GTP-binding protein involved in nucleocytoplasmic transport. Required for the import of protein into the nucleus and also for RNA export. Involved in chromatin condensation and control of cell cycle. This Solanum lycopersicum (Tomato) protein is GTP-binding nuclear protein Ran2 (RAN2).